Here is a 743-residue protein sequence, read N- to C-terminus: Putative cation exchanger C3A12.06c (743 aa).

13 consecutive transmembrane segments (helical) span residues 13–33 (LILL…HRIS), 109–129 (FPVL…IGIS), 138–158 (LVTI…TFLA), 182–202 (IGEL…SVCL), 213–233 (FLRD…FVLH), 239–258 (IWQS…FVFF), 528–548 (LRLL…ITGG), 551–571 (LYIY…LYYY), 580–600 (FLPW…STIA), 609–629 (ALGV…FAAG), 649–669 (MAMG…IGIS), 690–710 (LSIT…YVPL), and 718–738 (VLGL…IVVE).

Belongs to the Ca(2+):cation antiporter (CaCA) (TC 2.A.19) family.

Its subcellular location is the endoplasmic reticulum membrane. Its function is as follows. Putative cation exchanger. The protein is Putative cation exchanger C3A12.06c of Schizosaccharomyces pombe (strain 972 / ATCC 24843) (Fission yeast).